The primary structure comprises 644 residues: Serine/threonine kinase YeaG (644 aa).

This sequence belongs to the PrkA family. Monomer.

The protein localises to the cytoplasm. The catalysed reaction is L-seryl-[protein] + ATP = O-phospho-L-seryl-[protein] + ADP + H(+). It carries out the reaction L-threonyl-[protein] + ATP = O-phospho-L-threonyl-[protein] + ADP + H(+). Kinase that plays a role in the adaptation to sustained nitrogen starvation. This Escherichia coli O157:H7 protein is Serine/threonine kinase YeaG (yeaG).